The following is a 1856-amino-acid chain: DNA-directed RNA polymerase II subunit RPB1 (1856 aa).

8 residues coordinate Zn(2+): C66, C69, C76, H79, C106, C109, C149, and C177. The tract at residues 256 to 268 is lid loop; that stretch reads PAVVTFGSAKNQD. The interval 314–331 is rudder loop; it reads NCIPGLPTATQKGGRPLK. Positions 489, 491, and 493 each coordinate Mg(2+). A bridging helix region spans residues 827–839; it reads PSEFFFHAMGGRE. K1260 participates in a covalent cross-link: Glycyl lysine isopeptide (Lys-Gly) (interchain with G-Cter in ubiquitin). Positions 1523-1856 are disordered; the sequence is PTTGGMSPGA…PSSPTYDPNS (334 aa). Residues 1587 to 1856 are compositionally biased toward low complexity; that stretch reads SMTSPHYSPT…PSSPTYDPNS (270 aa). 27 repeat units span residues 1593-1599, 1600-1606, 1616-1622, 1623-1629, 1630-1636, 1637-1643, 1644-1650, 1651-1657, 1658-1664, 1665-1671, 1672-1678, 1679-1685, 1686-1692, 1693-1699, 1700-1706, 1707-1713, 1720-1726, 1727-1733, 1734-1740, 1741-1747, 1748-1754, 1755-1761, 1769-1775, 1782-1788, 1789-1795, 1796-1802, and 1803-1809. The C-terminal domain (CTD); 28 X 7 AA approximate tandem repeats of Y-[ST]-P-[ST]-S-P-[AGKNQRST] stretch occupies residues 1593-1816; the sequence is YSPTSPSYSP…SPTYTPSPSE (224 aa). The stretch at 1810–1816 is one 28; approximate repeat; it reads YTPSPSE.

It belongs to the RNA polymerase beta' chain family. In terms of assembly, component of the RNA polymerase II (Pol II) complex consisting of 12 subunits. Interacts with sig-7. In terms of processing, the tandem 7 residues repeats in the C-terminal domain (CTD) can be highly phosphorylated. The phosphorylation activates Pol II. Phosphorylation occurs mainly at residues 'Ser-2' and 'Ser-5' of the heptapeptide repeat and starts at the 3- to 4-cell embryonic stage. This phosphorylation also occurs in the early stages of oocyte development and is not detected in oocytes arrested at the meiotic diakinesis stage. In the somatic lineage, phosphorylation at 'Ser-2' is mediated by cdk-12 downstream of cdk-9 whereas in the germline lineage cdk-12 phosphorylates 'Ser-2' independently of cdk-9. Phosphorylation is likely mediated by cdk-7. May be dephosphorylated by fcp-1 in diakinetic oocytes and in 1-cell and 2-cell embryos. Dephosphorylated at 'Ser-5' of the heptapeptide repeats by ssup-72. The phosphorylation state is believed to result from the balanced action of site-specific CTD kinases and phosphatase, and a 'CTD code' that specifies the position of Pol II within the transcription cycle has been proposed. Following transcription stress, the elongating form of RNA polymerase II (RNA pol IIo) is polyubiquitinated via 'Lys-63'-linkages on Lys-1260 at DNA damage sites without leading to degradation: ubiquitination promotes RNA pol IIo backtracking to allow access by the transcription-coupled nucleotide excision repair (TC-NER) machinery. Subsequent DEF1-dependent polyubiquitination by the elongin complex via 'Lys-48'-linkages may lead to proteasome-mediated degradation; presumably at stalled RNA pol II where TC-NER has failed, to halt global transcription and enable 'last resort' DNA repair pathways.

The protein resides in the nucleus. It localises to the chromosome. It carries out the reaction RNA(n) + a ribonucleoside 5'-triphosphate = RNA(n+1) + diphosphate. In terms of biological role, DNA-dependent RNA polymerase catalyzes the transcription of DNA into RNA using the four ribonucleoside triphosphates as substrates. Largest and catalytic component of RNA polymerase II which synthesizes mRNA precursors and many functional non-coding RNAs. Forms the polymerase active center together with the second largest subunit. Pol II is the central component of the basal RNA polymerase II transcription machinery. It is composed of mobile elements that move relative to each other. RPB1 is part of the core element with the central large cleft, the clamp element that moves to open and close the cleft and the jaws that are thought to grab the incoming DNA template. At the start of transcription, a single-stranded DNA template strand of the promoter is positioned within the central active site cleft of Pol II. A bridging helix emanates from RPB1 and crosses the cleft near the catalytic site and is thought to promote translocation of Pol II by acting as a ratchet that moves the RNA-DNA hybrid through the active site by switching from straight to bent conformations at each step of nucleotide addition. During transcription elongation, Pol II moves on the template as the transcript elongates. Elongation is influenced by the phosphorylation status of the C-terminal domain (CTD) of Pol II largest subunit (RPB1), which serves as a platform for assembly of factors that regulate transcription initiation, elongation, termination and mRNA processing. Involved in the transcription of several genes including those involved in embryogenesis. This is DNA-directed RNA polymerase II subunit RPB1 from Caenorhabditis elegans.